The chain runs to 726 residues: Myb-like protein Z (726 aa).

Disordered regions lie at residues 15–109, 124–149, 161–239, and 272–303; these read DSND…SLSN, ASPS…YHPY, HYVS…TKQQ, and LIPS…NMRS. A compositionally biased stretch (low complexity) spans 18–39; that stretch reads DNNNNNNNNNNSNNNNNNNNNN. Positions 45–80 are enriched in polar residues; that stretch reads SSATSSPTGQDSTIDRPNSPSSSIKFTYPSKNSIVT. Residues 81–108 show a composition bias toward low complexity; sequence SPSSLQLPSPSFSSSSSSSSSSSSSSLS. A compositionally biased stretch (polar residues) spans 124-147; the sequence is ASPSKSSENSPTIHTSSLSPNSYH. The span at 165-177 shows a compositional bias: low complexity; that stretch reads NNNNNNNNNNNNN. Residues 183-209 are compositionally biased toward polar residues; sequence SSELYNTSPSISSKTTPNGSSTNNSPF. Residues 221 to 239 show a composition bias toward low complexity; it reads NNNNNNNNDRNENNTTKQQ. In terms of domain architecture, Myb-like spans 329-388; that stretch reads IPIATRKLWSQEECCRLLEMVFQRDPQSVTSKESELRWRSIASTLGRTVTSTRKKYMRLM. The segment covering 516–651 has biased composition (low complexity); that stretch reads KQIQQQQKQK…NNNYRSSLSP (136 aa). Residues 516-726 form a disordered region; it reads KQIQQQQKQK…NNNNYNNYHN (211 aa). Over residues 661–675 the composition is skewed to polar residues; it reads QSPQQKSNNENQQNF. Residues 709–726 are compositionally biased toward low complexity; the sequence is NLNNNNNNNNNNYNNYHN.

The chain is Myb-like protein Z (mybZ) from Dictyostelium discoideum (Social amoeba).